Here is a 417-residue protein sequence, read N- to C-terminus: Gamma-glutamyl phosphate reductase (417 aa).

It belongs to the gamma-glutamyl phosphate reductase family.

Its subcellular location is the cytoplasm. It carries out the reaction L-glutamate 5-semialdehyde + phosphate + NADP(+) = L-glutamyl 5-phosphate + NADPH + H(+). It participates in amino-acid biosynthesis; L-proline biosynthesis; L-glutamate 5-semialdehyde from L-glutamate: step 2/2. Functionally, catalyzes the NADPH-dependent reduction of L-glutamate 5-phosphate into L-glutamate 5-semialdehyde and phosphate. The product spontaneously undergoes cyclization to form 1-pyrroline-5-carboxylate. The sequence is that of Gamma-glutamyl phosphate reductase from Chlorobium phaeobacteroides (strain BS1).